The chain runs to 44 residues: Photosystem I reaction center subunit IX (44 aa).

The helical transmembrane segment at Tyr-7–Ile-27 threads the bilayer.

It belongs to the PsaJ family.

It is found in the plastid. It localises to the chloroplast thylakoid membrane. May help in the organization of the PsaE and PsaF subunits. The protein is Photosystem I reaction center subunit IX of Arabis hirsuta (Hairy rock-cress).